Here is a 390-residue protein sequence, read N- to C-terminus: Protein dom34 (390 aa).

This sequence belongs to the eukaryotic release factor 1 family. Pelota subfamily. As to quaternary structure, component of the Dom34-Hbs1 complex, also named Pelota-HBS1L complex, composed of dom34 and hbs1. A divalent metal cation is required as a cofactor.

It localises to the cytoplasm. Its function is as follows. Component of the Dom34-Hbs1 complex, a complex that recognizes stalled ribosomes and triggers the No-Go Decay (NGD) pathway. In the Dom34-Hbs1 complex, dom34 recognizes ribosomes stalled at the 3' end of an mRNA and engages stalled ribosomes by destabilizing mRNA in the mRNA channel. Following ribosome-binding, the Dom34-Hbs1 complex promotes the disassembly of stalled ribosomes, followed by degradation of damaged mRNAs as part of the NGD pathway. In Schizosaccharomyces pombe (strain 972 / ATCC 24843) (Fission yeast), this protein is Protein dom34.